We begin with the raw amino-acid sequence, 709 residues long: Phosphoribosylformylglycinamidine synthase subunit PurL (709 aa).

His36 is a catalytic residue. Residues Tyr39 and Lys80 each contribute to the ATP site. Glu82 is a Mg(2+) binding site. Residues 83-86 (SHNH) and Arg105 each bind substrate. Residue His84 is the Proton acceptor of the active site. Asp106 contributes to the Mg(2+) binding site. Gln226 provides a ligand contact to substrate. Residue Asp252 participates in Mg(2+) binding. 294-296 (ETQ) is a substrate binding site. 2 residues coordinate ATP: Asp470 and Gly507. Position 510 (Ser510) interacts with substrate.

Belongs to the FGAMS family. In terms of assembly, monomer. Part of the FGAM synthase complex composed of 1 PurL, 1 PurQ and 2 PurS subunits.

It localises to the cytoplasm. The enzyme catalyses N(2)-formyl-N(1)-(5-phospho-beta-D-ribosyl)glycinamide + L-glutamine + ATP + H2O = 2-formamido-N(1)-(5-O-phospho-beta-D-ribosyl)acetamidine + L-glutamate + ADP + phosphate + H(+). The protein operates within purine metabolism; IMP biosynthesis via de novo pathway; 5-amino-1-(5-phospho-D-ribosyl)imidazole from N(2)-formyl-N(1)-(5-phospho-D-ribosyl)glycinamide: step 1/2. In terms of biological role, part of the phosphoribosylformylglycinamidine synthase complex involved in the purines biosynthetic pathway. Catalyzes the ATP-dependent conversion of formylglycinamide ribonucleotide (FGAR) and glutamine to yield formylglycinamidine ribonucleotide (FGAM) and glutamate. The FGAM synthase complex is composed of three subunits. PurQ produces an ammonia molecule by converting glutamine to glutamate. PurL transfers the ammonia molecule to FGAR to form FGAM in an ATP-dependent manner. PurS interacts with PurQ and PurL and is thought to assist in the transfer of the ammonia molecule from PurQ to PurL. In Saccharolobus islandicus (strain M.16.27) (Sulfolobus islandicus), this protein is Phosphoribosylformylglycinamidine synthase subunit PurL.